Reading from the N-terminus, the 324-residue chain is 4-hydroxyphenylpyruvate 3-dimethylallyltransferase (324 aa).

The substrate site is built by R160 and E281.

It belongs to the aromatic prenyltransferase family. In terms of assembly, monomer.

The enzyme catalyses 3-(4-hydroxyphenyl)pyruvate + dimethylallyl diphosphate = 3-dimethylallyl-4-hydroxyphenylpyruvate + diphosphate. Its pathway is antibiotic biosynthesis. In terms of biological role, magnesium-independent aromatic prenyltransferase that catalyzes the irreversible transfer of a dimethylallyl group to 4-hydroxyphenylpyruvate to produce the ring A structure in the clorobiocin biosynthesis pathway. Clorobiocin is an aminocoumarin family antibiotic. The polypeptide is 4-hydroxyphenylpyruvate 3-dimethylallyltransferase (Streptomyces roseochromogenus subsp. oscitans).